Reading from the N-terminus, the 273-residue chain is NH(3)-dependent NAD(+) synthetase (273 aa).

ATP is bound at residue 46-53; sequence GISGGQDS. D52 contacts Mg(2+). R139 lines the deamido-NAD(+) pocket. T159 contacts ATP. E164 is a binding site for Mg(2+). Deamido-NAD(+) contacts are provided by K172 and D179. Positions 188 and 210 each coordinate ATP. Residue 259–260 participates in deamido-NAD(+) binding; the sequence is HK.

The protein belongs to the NAD synthetase family. Homodimer.

The enzyme catalyses deamido-NAD(+) + NH4(+) + ATP = AMP + diphosphate + NAD(+) + H(+). It participates in cofactor biosynthesis; NAD(+) biosynthesis; NAD(+) from deamido-NAD(+) (ammonia route): step 1/1. Catalyzes the ATP-dependent amidation of deamido-NAD to form NAD. Uses ammonia as a nitrogen source. The polypeptide is NH(3)-dependent NAD(+) synthetase (Mycobacteroides abscessus (strain ATCC 19977 / DSM 44196 / CCUG 20993 / CIP 104536 / JCM 13569 / NCTC 13031 / TMC 1543 / L948) (Mycobacterium abscessus)).